Consider the following 188-residue polypeptide: Elongation factor P (188 aa).

This sequence belongs to the elongation factor P family.

It is found in the cytoplasm. Its pathway is protein biosynthesis; polypeptide chain elongation. In terms of biological role, involved in peptide bond synthesis. Stimulates efficient translation and peptide-bond synthesis on native or reconstituted 70S ribosomes in vitro. Probably functions indirectly by altering the affinity of the ribosome for aminoacyl-tRNA, thus increasing their reactivity as acceptors for peptidyl transferase. The sequence is that of Elongation factor P from Rhodopseudomonas palustris (strain BisA53).